The primary structure comprises 71 residues: Small ribosomal subunit protein bS21 (71 aa).

The protein belongs to the bacterial ribosomal protein bS21 family.

The protein is Small ribosomal subunit protein bS21 of Shewanella amazonensis (strain ATCC BAA-1098 / SB2B).